The sequence spans 261 residues: Ribonuclease PH (261 aa).

Residues Arg-87 and 125 to 127 (GTR) each bind phosphate.

It belongs to the RNase PH family. In terms of assembly, homohexameric ring arranged as a trimer of dimers.

The catalysed reaction is tRNA(n+1) + phosphate = tRNA(n) + a ribonucleoside 5'-diphosphate. Its function is as follows. Phosphorolytic 3'-5' exoribonuclease that plays an important role in tRNA 3'-end maturation. Removes nucleotide residues following the 3'-CCA terminus of tRNAs; can also add nucleotides to the ends of RNA molecules by using nucleoside diphosphates as substrates, but this may not be physiologically important. Probably plays a role in initiation of 16S rRNA degradation (leading to ribosome degradation) during starvation. In Thermoanaerobacter pseudethanolicus (strain ATCC 33223 / 39E) (Clostridium thermohydrosulfuricum), this protein is Ribonuclease PH.